The chain runs to 163 residues: Cyanate hydratase (163 aa).

Active-site residues include R103, E106, and S129.

Belongs to the cyanase family.

It catalyses the reaction cyanate + hydrogencarbonate + 3 H(+) = NH4(+) + 2 CO2. Functionally, catalyzes the reaction of cyanate with bicarbonate to produce ammonia and carbon dioxide. This is Cyanate hydratase from Paracoccidioides lutzii (strain ATCC MYA-826 / Pb01) (Paracoccidioides brasiliensis).